We begin with the raw amino-acid sequence, 221 residues long: Probable GTP-binding protein EngB (221 aa).

One can recognise an EngB-type G domain in the interval 32 to 205 (GIPQIAFAGR…RKIVDSLITT (174 aa)). GTP-binding positions include 40-47 (GRSNAGKS), 67-71 (GKTKL), 85-88 (DLPG), 152-155 (TKID), and 184-186 (VSN). Positions 47 and 69 each coordinate Mg(2+).

The protein belongs to the TRAFAC class TrmE-Era-EngA-EngB-Septin-like GTPase superfamily. EngB GTPase family. It depends on Mg(2+) as a cofactor.

In terms of biological role, necessary for normal cell division and for the maintenance of normal septation. The chain is Probable GTP-binding protein EngB from Leptospira borgpetersenii serovar Hardjo-bovis (strain JB197).